A 209-amino-acid chain; its full sequence is Glycolipid transfer protein B (209 aa).

2 consecutive repeat copies span residues 45–55 (IKADITGNITK) and 56–66 (IRSVYESNPTQ). The segment at 45 to 66 (IKADITGNITKIRSVYESNPTQ) is 2 X 12 AA approximate tandem repeats. Residue 48 to 55 (DITGNITK) participates in beta-D-galactosyl-(1-&gt;4)-beta-D-glucosyl-(1&lt;-&gt;1)-N-[(9Z)-octadecenoyl]-sphing-4-enine binding. Beta-D-galactosyl-(1-&gt;4)-beta-D-glucosyl-(1&lt;-&gt;1)-N-[(9Z)-octadecenoyl]-sphing-4-enine-binding residues include histidine 140 and tyrosine 207.

It belongs to the GLTP family.

It localises to the cytoplasm. Accelerates the intermembrane transfer of various glycolipids. Catalyzes the transfer of various glycosphingolipids between membranes but does not catalyze the transfer of phospholipids. May be involved in the intracellular translocation of glucosylceramides. The polypeptide is Glycolipid transfer protein B (gltp-b) (Xenopus laevis (African clawed frog)).